The chain runs to 241 residues: Transcription initiation factor TFIID subunit 14 (241 aa).

The YEATS domain maps to 1–137; it reads MTTVKRTVRL…PGLLKALTAT (137 aa). The segment at 141–169 is disordered; sequence PGYSDEGEEARKDKRKNESEVGAGKKKAK. Over residues 149–159 the composition is skewed to basic and acidic residues; it reads EARKDKRKNES.

Belongs to the TAF14 family. Component of the fcp1/TFIIF/polII complex via interaction of tfg3 with both tfg1/TFIIF-alpha and tfg2/TFIIF-beta subunits. Component of the SWI/SNF global transcription activator complex composed of at least arp9, arp42, snf5, snf22, snf30, sbf59, sol1, ssr1, ssr2, ssr3, ssr4 and tfg3. Also interacts with the TATA-binding protein (TBP). Component of the mst2 complex composed of at least eaf6, mst2, nto1, pdp3, ptf1, ptf2 and tfg3.

It localises to the nucleus. The protein resides in the nucleoplasm. Functions as a component of the DNA-binding general transcription factor complex TFIID, and the RNA polymerase II associated general transcription factor complex TFIIF. Binding of TFIID to a promoter (with or without TATA element) is the initial step in preinitiation complex (PIC) formation. TFIID plays a key role in the regulation of gene expression by RNA polymerase II through different activities such as transcription activator interaction, core promoter recognition and selectivity, TFIIA and TFIIB interaction, facilitation of DNA opening and initiation of transcription. TFIIF is essential for the initiation of transcription by RNA polymerase II. TFIIF functions include the recruitment of RNA polymerase II to the promoter bound DNA-TBP-TFIIB complex, decreasing the affinity of RNA polymerase II for non-specific DNA, allowing for the subsequent recruitment of TFIIE and TFIIH, and facilitating RNA polymerase II elongation. The TAF14 subunit has stimulatory activity. Component of the SWI/SNF complex, an ATP-dependent chromatin remodeling complex, required for the positive and negative regulation of gene expression of a large number of genes. It changes chromatin structure by altering DNA-histone contacts within a nucleosome, leading eventually to a change in nucleosome position, thus facilitating or repressing binding of gene-specific transcription factors. Component of the mst2 complex which is a highly specific H3 lysine 14 (H3K14) acetyltransferase that functions together with gcn5 to regulate global levels of H3K14 acetylation (H3K14ac), critical for DNA damage checkpoint activation. In Schizosaccharomyces pombe (strain 972 / ATCC 24843) (Fission yeast), this protein is Transcription initiation factor TFIID subunit 14 (tfg3).